Reading from the N-terminus, the 977-residue chain is uncharacterized protein (977 aa).

The segment covering 1–24 (MMQQRSGSLSLLSNAVQAGQSSDP) has biased composition (polar residues). Positions 1–65 (MMQQRSGSLS…HEKTKAGKDR (65 aa)) are disordered. Residues 72 to 99 (CQSCRKKKVKCSGERPSCDQCLKHNIPC) constitute a DNA-binding region (zn(2)-C6 fungal-type). Residues 176-195 (LSHPTIVPSSNSSSLLNSTN) form a disordered region. A compositionally biased stretch (low complexity) spans 177-195 (SHPTIVPSSNSSSLLNSTN). Ser220 is modified (phosphoserine). Disordered regions lie at residues 287 to 307 (TDSL…DSNR), 357 to 380 (NSAS…NNSL), and 751 to 774 (HTPI…ANGA). Residues 364-379 (STSYTNNNDTTSDNNS) show a composition bias toward low complexity. The segment covering 751–770 (HTPINVTNGESQNNSNNDPS) has biased composition (polar residues).

The protein localises to the cytoplasm. Its subcellular location is the nucleus. This is an uncharacterized protein from Schizosaccharomyces pombe (strain 972 / ATCC 24843) (Fission yeast).